Consider the following 56-residue polypeptide: Small ribosomal subunit protein uS14 (56 aa).

Cysteine 21, cysteine 24, cysteine 39, and cysteine 42 together coordinate Zn(2+).

Belongs to the universal ribosomal protein uS14 family. Zn(2+) serves as cofactor.

This chain is Small ribosomal subunit protein uS14 (RPS29), found in Candida glabrata (strain ATCC 2001 / BCRC 20586 / JCM 3761 / NBRC 0622 / NRRL Y-65 / CBS 138) (Yeast).